Here is a 226-residue protein sequence, read N- to C-terminus: Lipoprotein-releasing system ATP-binding protein LolD (226 aa).

The ABC transporter domain occupies 5 to 225; that stretch reads FALSNISKFF…EINSCMLSSV (221 aa). Position 40-47 (40-47) interacts with ATP; the sequence is GRSGSGKS.

It belongs to the ABC transporter superfamily. Lipoprotein translocase (TC 3.A.1.125) family. In terms of assembly, the complex is composed of two ATP-binding proteins (LolD) and two transmembrane proteins (LolC and LolE).

The protein localises to the cell inner membrane. In terms of biological role, part of the ABC transporter complex LolCDE involved in the translocation of mature outer membrane-directed lipoproteins, from the inner membrane to the periplasmic chaperone, LolA. Responsible for the formation of the LolA-lipoprotein complex in an ATP-dependent manner. The protein is Lipoprotein-releasing system ATP-binding protein LolD of Ehrlichia canis (strain Jake).